The primary structure comprises 921 residues: Isoleucine--tRNA ligase (921 aa).

The 'HIGH' region signature appears at 57-67 (PYANGELHMGH). Glu552 contributes to the L-isoleucyl-5'-AMP binding site. Residues 593–597 (KMSKS) carry the 'KMSKS' region motif. Lys596 contributes to the ATP binding site. Zn(2+) is bound by residues Cys888, Cys891, Cys908, and Cys911.

This sequence belongs to the class-I aminoacyl-tRNA synthetase family. IleS type 1 subfamily. As to quaternary structure, monomer. Requires Zn(2+) as cofactor.

The protein resides in the cytoplasm. The enzyme catalyses tRNA(Ile) + L-isoleucine + ATP = L-isoleucyl-tRNA(Ile) + AMP + diphosphate. In terms of biological role, catalyzes the attachment of isoleucine to tRNA(Ile). As IleRS can inadvertently accommodate and process structurally similar amino acids such as valine, to avoid such errors it has two additional distinct tRNA(Ile)-dependent editing activities. One activity is designated as 'pretransfer' editing and involves the hydrolysis of activated Val-AMP. The other activity is designated 'posttransfer' editing and involves deacylation of mischarged Val-tRNA(Ile). This chain is Isoleucine--tRNA ligase, found in Listeria monocytogenes serotype 4b (strain F2365).